Consider the following 135-residue polypeptide: Small ribosomal subunit protein uS9 (135 aa).

A compositionally biased stretch (basic and acidic residues) spans 107–118; that stretch reads LVGDPRRTEPHK. The tract at residues 107–135 is disordered; sequence LVGDPRRTEPHKPNRSTKGPRAKRQKSYR. Residues 119–135 show a composition bias toward basic residues; the sequence is PNRSTKGPRAKRQKSYR.

The protein belongs to the universal ribosomal protein uS9 family. In terms of assembly, part of the 30S ribosomal subunit.

The sequence is that of Small ribosomal subunit protein uS9 from Pyrococcus furiosus (strain ATCC 43587 / DSM 3638 / JCM 8422 / Vc1).